Consider the following 392-residue polypeptide: Formate-dependent phosphoribosylglycinamide formyltransferase (392 aa).

Residues 22-23 (EL) and E82 contribute to the N(1)-(5-phospho-beta-D-ribosyl)glycinamide site. ATP is bound by residues R114, K155, 160-165 (SSGKGQ), 195-198 (EGEV), and E203. One can recognise an ATP-grasp domain in the interval 119 to 308 (RLAAETLALP…EFALHVRAFL (190 aa)). Residues E267 and E279 each coordinate Mg(2+). N(1)-(5-phospho-beta-D-ribosyl)glycinamide is bound by residues D286, K355, and 362 to 363 (RR).

It belongs to the PurK/PurT family. Homodimer.

The enzyme catalyses N(1)-(5-phospho-beta-D-ribosyl)glycinamide + formate + ATP = N(2)-formyl-N(1)-(5-phospho-beta-D-ribosyl)glycinamide + ADP + phosphate + H(+). Its pathway is purine metabolism; IMP biosynthesis via de novo pathway; N(2)-formyl-N(1)-(5-phospho-D-ribosyl)glycinamide from N(1)-(5-phospho-D-ribosyl)glycinamide (formate route): step 1/1. Functionally, involved in the de novo purine biosynthesis. Catalyzes the transfer of formate to 5-phospho-ribosyl-glycinamide (GAR), producing 5-phospho-ribosyl-N-formylglycinamide (FGAR). Formate is provided by PurU via hydrolysis of 10-formyl-tetrahydrofolate. This Edwardsiella ictaluri (strain 93-146) protein is Formate-dependent phosphoribosylglycinamide formyltransferase.